Consider the following 355-residue polypeptide: CRAL-TRIO domain-containing protein C365.01 (355 aa).

Residues 93–260 (ENGLNQNFVK…SMHGQFDETK (168 aa)) form the CRAL-TRIO domain.

In Schizosaccharomyces pombe (strain 972 / ATCC 24843) (Fission yeast), this protein is CRAL-TRIO domain-containing protein C365.01.